Reading from the N-terminus, the 557-residue chain is MDQSRVLLWVKAEPFIVGALQVPPPSKFSLHYLRKISTYVQIRATEGAYPRLYWSTWRHIACGKLQLAKDLAWLYFEIFDSLSMKTPEERLEWSEVLSNCMSEEEVEKQRNQLSVDTLQFLLFLYIQQLNKVSLRTSLIGEEWPSPRNKSQSPDLTEKSNCHNKNWNDYSHQAFVYDHLSDLLELLLDPKQLTASFHSTHSSLVSREAVVALSFLIEGTISRARKIYPLHELALWQPLHADSGFSKISKTFSFYKLETWLRSCLTGNPFGTSACLKSGKKLAWAHQVEGTTKRAKIACNTHVAPRMHRLVVMSQVYKQTLAKSSDTLAGAHVKIHRCNESFIYLLSPLRSVTIEKCRNSIFVLGPVGTTLHLHSCDNVKVIAVCHRLSISSTTGCIFHVLTPTRPLILSGNQTVTFAPFHTHYPMLEDHMARTGLATVPNYWDNPMVVCRENSDTRVFQLLPPCEFYVFIIPFEMEGDTTEIPGGLPSVYQKALGQREQKIQIWQKTVKEAHLTKDQRKQFQVLVENKFYEWLINTGHRQQLDSLVPPAAGSKQAAG.

One can recognise a C-CAP/cofactor C-like domain in the interval 290–435; it reads TTKRAKIACN…LEDHMARTGL (146 aa).

Belongs to the TBCC family.

The protein resides in the cytoplasm. It is found in the cytoskeleton. It localises to the microtubule organizing center. The protein localises to the centrosome. Its subcellular location is the spindle pole. Functionally, plays a role in the regulation of centrosome and Golgi apparatus positioning, with consequences on cell shape and cell migration. In Homo sapiens (Human), this protein is TBCC domain-containing protein 1 (TBCCD1).